Consider the following 462-residue polypeptide: MIGNSSKDNFGQQQKLSRGLKNRHIQLMAIGGAIGTGLFLGSGKSIHFAGPSILFAYLITGVFCFFIMRSLGELLLSNAGYHSFVDFVRDYLGNMAAFITGWTYWFCWISLAMADLTAVGIYTQYWLPDVPQWLPGLLALIILLIMNLATVKLFGELEFWFALIKVIAILALIVTGILLIAKGFSAASGPASLNNLWSHGGMFPNGWHGFILSFQMVVFAFVGIELVGLTAGETENPQKVIPKAINQIPVRILLFYVGALFVIMCIYPWNVLNPNESPFVQVFSAVGIVVAASLINFVVLTSAASAANSALFSTSRMVYSLAKDHHAPGLLKKLTSSNVPSNALFFSSIAILIGVSLNYLMPEQVFTLITSVSTICFIFIWGITVICHLKYRKTRQHEAKANKFKMPFYPLSNYLTLAFLAFILVILALANDTRIALFVTPVWFVLLIILYKVQTRRGHKVK.

The next 12 helical transmembrane spans lie at 27–47 (LMAIGGAIGTGLFLGSGKSIH), 48–68 (FAGPSILFAYLITGVFCFFIM), 96–116 (AAFITGWTYWFCWISLAMADL), 134–154 (LPGLLALIILLIMNLATVKLF), 160–180 (WFALIKVIAILALIVTGILLI), 209–229 (GFILSFQMVVFAFVGIELVGL), 252–272 (ILLFYVGALFVIMCIYPWNVL), 279–299 (FVQVFSAVGIVVAASLINFVV), 343–363 (ALFFSSIAILIGVSLNYLMPE), 366–386 (FTLITSVSTICFIFIWGITVI), 410–430 (PLSNYLTLAFLAFILVILALA), and 435–455 (IALFVTPVWFVLLIILYKVQT).

It belongs to the amino acid-polyamine-organocation (APC) superfamily.

The protein localises to the cell membrane. Its function is as follows. Probable amino-acid or metabolite transport protein. The protein is Amino-acid permease AapA (aapA) of Bacillus subtilis (strain 168).